The chain runs to 402 residues: Succinylornithine transaminase (402 aa).

The residue at position 252 (K252) is an N6-(pyridoxal phosphate)lysine.

Belongs to the class-III pyridoxal-phosphate-dependent aminotransferase family. AstC subfamily. The cofactor is pyridoxal 5'-phosphate.

It catalyses the reaction N(2)-succinyl-L-ornithine + 2-oxoglutarate = N-succinyl-L-glutamate 5-semialdehyde + L-glutamate. The protein operates within amino-acid degradation; L-arginine degradation via AST pathway; L-glutamate and succinate from L-arginine: step 3/5. Its function is as follows. Catalyzes the transamination of N(2)-succinylornithine and alpha-ketoglutarate into N(2)-succinylglutamate semialdehyde and glutamate. Can also act as an acetylornithine aminotransferase. This chain is Succinylornithine transaminase, found in Photorhabdus laumondii subsp. laumondii (strain DSM 15139 / CIP 105565 / TT01) (Photorhabdus luminescens subsp. laumondii).